A 191-amino-acid chain; its full sequence is A-type ATP synthase subunit E (191 aa).

Belongs to the V-ATPase E subunit family. Has multiple subunits with at least A(3), B(3), C, D, E, F, H, I and proteolipid K(x).

The protein resides in the cell membrane. Its function is as follows. Component of the A-type ATP synthase that produces ATP from ADP in the presence of a proton gradient across the membrane. This chain is A-type ATP synthase subunit E, found in Methanoregula boonei (strain DSM 21154 / JCM 14090 / 6A8).